The following is a 370-amino-acid chain: Spermidine/putrescine import ATP-binding protein PotA 1 (370 aa).

The ABC transporter domain maps to 12–250; it reads VSIRAVRKVY…PGNRFVADFI (239 aa). Residue 48–55 coordinates ATP; that stretch reads GPSGCGKT.

The protein belongs to the ABC transporter superfamily. Spermidine/putrescine importer (TC 3.A.1.11.1) family. In terms of assembly, the complex is composed of two ATP-binding proteins (PotA), two transmembrane proteins (PotB and PotC) and a solute-binding protein (PotD).

The protein localises to the cell inner membrane. It carries out the reaction ATP + H2O + polyamine-[polyamine-binding protein]Side 1 = ADP + phosphate + polyamineSide 2 + [polyamine-binding protein]Side 1.. Part of the ABC transporter complex PotABCD involved in spermidine/putrescine import. Responsible for energy coupling to the transport system. This Pseudomonas aeruginosa (strain ATCC 15692 / DSM 22644 / CIP 104116 / JCM 14847 / LMG 12228 / 1C / PRS 101 / PAO1) protein is Spermidine/putrescine import ATP-binding protein PotA 1.